The sequence spans 263 residues: Hydroxyethylthiazole kinase (263 aa).

Methionine 41 is a substrate binding site. 2 residues coordinate ATP: arginine 117 and serine 163. Substrate is bound at residue glycine 190.

It belongs to the Thz kinase family. Mg(2+) is required as a cofactor.

It carries out the reaction 5-(2-hydroxyethyl)-4-methylthiazole + ATP = 4-methyl-5-(2-phosphooxyethyl)-thiazole + ADP + H(+). It participates in cofactor biosynthesis; thiamine diphosphate biosynthesis; 4-methyl-5-(2-phosphoethyl)-thiazole from 5-(2-hydroxyethyl)-4-methylthiazole: step 1/1. Its function is as follows. Catalyzes the phosphorylation of the hydroxyl group of 4-methyl-5-beta-hydroxyethylthiazole (THZ). This chain is Hydroxyethylthiazole kinase, found in Lactiplantibacillus plantarum (strain ATCC BAA-793 / NCIMB 8826 / WCFS1) (Lactobacillus plantarum).